A 653-amino-acid chain; its full sequence is Fructose-1,6-bisphosphatase class 3 2 (653 aa).

The protein belongs to the FBPase class 3 family. The cofactor is Mn(2+).

It carries out the reaction beta-D-fructose 1,6-bisphosphate + H2O = beta-D-fructose 6-phosphate + phosphate. Its pathway is carbohydrate biosynthesis; gluconeogenesis. The chain is Fructose-1,6-bisphosphatase class 3 2 from Clostridium beijerinckii (strain ATCC 51743 / NCIMB 8052) (Clostridium acetobutylicum).